Reading from the N-terminus, the 328-residue chain is Probable cell division protein WhiA (328 aa).

The H-T-H motif DNA-binding region spans 275 to 308 (SLEELGQLASPPMTKDAVAGRIRRLLSMADKRAE).

The protein belongs to the WhiA family.

Its function is as follows. Involved in cell division and chromosome segregation. This Corynebacterium urealyticum (strain ATCC 43042 / DSM 7109) protein is Probable cell division protein WhiA.